The following is an 81-amino-acid chain: Sec-independent protein translocase protein TatA (81 aa).

The helical transmembrane segment at Met-1–Gly-21 threads the bilayer. A disordered region spans residues Gly-34–Ala-81. Basic and acidic residues-rich tracts occupy residues Asp-47 to Gln-59 and Lys-70 to Ala-81.

The protein belongs to the TatA/E family. In terms of assembly, the Tat system comprises two distinct complexes: a TatABC complex, containing multiple copies of TatA, TatB and TatC subunits, and a separate TatA complex, containing only TatA subunits. Substrates initially bind to the TatABC complex, which probably triggers association of the separate TatA complex to form the active translocon.

The protein resides in the cell inner membrane. Its function is as follows. Part of the twin-arginine translocation (Tat) system that transports large folded proteins containing a characteristic twin-arginine motif in their signal peptide across membranes. TatA could form the protein-conducting channel of the Tat system. The polypeptide is Sec-independent protein translocase protein TatA (Shewanella frigidimarina (strain NCIMB 400)).